Here is a 331-residue protein sequence, read N- to C-terminus: Probable allantoicase (331 aa).

This sequence belongs to the allantoicase family.

It catalyses the reaction allantoate + H2O = (S)-ureidoglycolate + urea. It participates in nitrogen metabolism; (S)-allantoin degradation; (S)-ureidoglycolate from allantoate (aminidohydrolase route): step 1/1. The sequence is that of Probable allantoicase from Pseudomonas fluorescens (strain Pf0-1).